The chain runs to 579 residues: Putative truncated flagellar export/assembly protein LfhA (579 aa).

Transmembrane regions (helical) follow at residues 86-106 (AIAGMMILAINLIGGVCIGIF), 124-144 (IGDGLVAQIPSLLLSTAAAII), and 177-197 (FVLAVVPGMPHLPFLLFSALL).

The protein belongs to the FHIPEP (flagella/HR/invasion proteins export pore) family.

Its subcellular location is the cell inner membrane. This is Putative truncated flagellar export/assembly protein LfhA from Escherichia coli (strain K12).